Reading from the N-terminus, the 147-residue chain is UPF0208 membrane protein SO_2914 (147 aa).

2 helical membrane-spanning segments follow: residues 40–60 and 68–88; these read LAIL…LYTY and ALTI…WLGW.

Belongs to the UPF0208 family.

It localises to the cell inner membrane. This Shewanella oneidensis (strain ATCC 700550 / JCM 31522 / CIP 106686 / LMG 19005 / NCIMB 14063 / MR-1) protein is UPF0208 membrane protein SO_2914.